The chain runs to 215 residues: LysM and putative peptidoglycan-binding domain-containing protein 2 (215 aa).

Residues 1–40 are disordered; sequence MADLSPAPALREGGPRAHRPSAPSPPPRSRSTSEPEEAEL. Residue Ala2 is modified to N-acetylalanine. Residues Ser5, Ser24, Ser33, and Ser57 each carry the phosphoserine modification. Residues 71–115 form the LysM domain; it reads VEHRVRAGDTLQGIALKYGVTMEQIKRANKLFTNDCIFLKKTLSI. Disordered regions lie at residues 135 to 176 and 195 to 215; these read ESET…EVSA and RKLK…LYHS. Residues 145-156 are compositionally biased toward acidic residues; the sequence is QEEEPVVSEEEL. The segment covering 157–169 has biased composition (pro residues); that stretch reads PPPSPQDPDPKPA. Over residues 196–205 the composition is skewed to basic and acidic residues; it reads KLKEESRDEE.

This Mus musculus (Mouse) protein is LysM and putative peptidoglycan-binding domain-containing protein 2 (Lysmd2).